Reading from the N-terminus, the 1585-residue chain is Sterol 3-beta-glucosyltransferase (1585 aa).

Pro residues predominate over residues 1-18 (MSPPISPTPPPLQPPFPP). 3 disordered regions span residues 1–154 (MSPP…CDFR), 177–225 (PWEE…PTHT), and 249–279 (YQYATPETSSRRTSAAGSESSSEGEVPLPKG). Composition is skewed to polar residues over residues 65-77 (DQATNSSNDSLIP), 105-123 (DAQTVRFSSSSPASYSTHE), and 132-148 (PRTSSRAPNTASSQMAE). The segment covering 178–194 (WEEDDDSDDGEDDDEFI) has biased composition (acidic residues). The segment covering 255 to 273 (ETSSRRTSAAGSESSSEGE) has biased composition (low complexity). The region spanning 387-555 (ERLMEVFGLE…EAIVDVEKSP (169 aa)) is the GRAM 1 domain. A PH domain is found at 438–530 (LLVKSGPLHK…WVKAIQKVMF (93 aa)). 2 disordered regions span residues 625 to 645 (TSHATIKRHGTDSSAEKLGMA) and 666 to 852 (DGEP…GSES). Positions 670–689 (LEEHSQGPHHNDEDASHLPH) are enriched in basic and acidic residues. Polar residues-rich tracts occupy residues 760-785 (TDSSTTVTESGPSLRSRTGRTKQASV), 806-817 (NKPSVVDSNSAE), and 827-840 (SWTSETSSGSQMVK). One can recognise a GRAM 2 domain in the interval 862-933 (RKFRTFFALS…RDLYGLKAQK (72 aa)). The UDP-alpha-D-glucose site is built by S1043, R1044, D1046, I1358, H1360, H1373, G1377, T1378, D1397, and Q1398. The interval 1499 to 1555 (NRVRSRSRSRSRSSQGRFSPRRHTVDDDGWSVVSGGSRSRSGSASAVTSPERRPLNI) is disordered. The segment covering 1529–1545 (SVVSGGSRSRSGSASAV) has biased composition (low complexity).

This sequence belongs to the glycosyltransferase 28 family.

The protein localises to the cytoplasm. Its subcellular location is the membrane. It carries out the reaction a sterol + UDP-alpha-D-glucose = a sterol 3-beta-D-glucoside + UDP + H(+). It catalyses the reaction ergosterol + UDP-alpha-D-glucose = ergosteryl 3-beta-D-glucoside + UDP + H(+). Functionally, sterol glycosyltransferase responsible for the glycosylation of ergosterol to form ergosterol-glucoside. This chain is Sterol 3-beta-glucosyltransferase, found in Cryptococcus neoformans var. neoformans serotype D (strain JEC21 / ATCC MYA-565) (Filobasidiella neoformans).